We begin with the raw amino-acid sequence, 308 residues long: Probable pyridoxal 5'-phosphate synthase subunit pdx-1 (308 aa).

Position 30 (Asp-30) interacts with D-ribose 5-phosphate. Catalysis depends on Lys-87, which acts as the Schiff-base intermediate with D-ribose 5-phosphate. Gly-159 is a binding site for D-ribose 5-phosphate. A D-glyceraldehyde 3-phosphate-binding site is contributed by Arg-171. Residues Gly-224 and 245–246 (GS) each bind D-ribose 5-phosphate.

It belongs to the PdxS/SNZ family.

The enzyme catalyses aldehydo-D-ribose 5-phosphate + D-glyceraldehyde 3-phosphate + L-glutamine = pyridoxal 5'-phosphate + L-glutamate + phosphate + 3 H2O + H(+). Its pathway is cofactor biosynthesis; pyridoxal 5'-phosphate biosynthesis. In terms of biological role, catalyzes the formation of pyridoxal 5'-phosphate from ribose 5-phosphate (RBP), glyceraldehyde 3-phosphate (G3P) and ammonia. The ammonia is provided by pdx-2. Can also use ribulose 5-phosphate and dihydroxyacetone phosphate as substrates, resulting from enzyme-catalyzed isomerization of RBP and G3P, respectively. Also plays an indirect role in resistance to singlet oxygen-generating photosensitizers. This chain is Probable pyridoxal 5'-phosphate synthase subunit pdx-1 (pdx-1), found in Neurospora crassa (strain ATCC 24698 / 74-OR23-1A / CBS 708.71 / DSM 1257 / FGSC 987).